Here is an 852-residue protein sequence, read N- to C-terminus: Taste receptor type 1 member 3 (852 aa).

Positions Met-1–Gly-20 are cleaved as a signal peptide. Residues Ala-21–Leu-570 are Extracellular-facing. N-linked (GlcNAc...) asparagine glycosylation is found at Asn-85, Asn-130, Asn-264, Asn-285, Asn-380, Asn-411, Asn-432, and Asn-475. Residues Leu-571 to Val-591 traverse the membrane as a helical segment. Residues His-592–Gly-603 are Cytoplasmic-facing. A helical membrane pass occupies residues Gly-604–Phe-624. Over Pro-625–Leu-639 the chain is Extracellular. A helical membrane pass occupies residues Ser-640–Val-660. At Glu-661–Trp-682 the chain is on the cytoplasmic side. A helical transmembrane segment spans residues Leu-683–Phe-703. Residues Pro-704–Ser-729 are Extracellular-facing. A helical membrane pass occupies residues Phe-730 to Leu-750. Residues Val-751–Arg-762 lie on the Cytoplasmic side of the membrane. The chain crosses the membrane as a helical span at residues Gly-763–Ala-783. Residues Asn-784–Pro-791 lie on the Extracellular side of the membrane. The helical transmembrane segment at Ala-792–Pro-812 threads the bilayer. The Cytoplasmic portion of the chain corresponds to Arg-813–Glu-852. The segment at Gly-833–Glu-852 is disordered. Residues Gly-839–Glu-852 show a composition bias toward basic and acidic residues.

The protein belongs to the G-protein coupled receptor 3 family. TAS1R subfamily. As to quaternary structure, forms homodimers or heterodimers with TAS1R1 and TAS1R2.

It localises to the cell membrane. Functionally, putative taste receptor. TAS1R1/TAS1R3 responds to the umami taste stimulus (the taste of monosodium glutamate). TAS1R2/TAS1R3 recognizes diverse natural and synthetic sweeteners. TAS1R3 is essential for the recognition and response to the disaccharide trehalose. Sequence differences within and between species can significantly influence the selectivity and specificity of taste responses. The polypeptide is Taste receptor type 1 member 3 (TAS1R3) (Gorilla gorilla gorilla (Western lowland gorilla)).